The following is a 118-amino-acid chain: Small ribosomal subunit protein uS13 (118 aa).

The tract at residues 94–118 is disordered; it reads SLPLRGQRTKTNARTRKGPRKPIKK.

The protein belongs to the universal ribosomal protein uS13 family. In terms of assembly, part of the 30S ribosomal subunit. Forms a loose heterodimer with protein S19. Forms two bridges to the 50S subunit in the 70S ribosome.

In terms of biological role, located at the top of the head of the 30S subunit, it contacts several helices of the 16S rRNA. In the 70S ribosome it contacts the 23S rRNA (bridge B1a) and protein L5 of the 50S subunit (bridge B1b), connecting the 2 subunits; these bridges are implicated in subunit movement. Contacts the tRNAs in the A and P-sites. The polypeptide is Small ribosomal subunit protein uS13 (Idiomarina loihiensis (strain ATCC BAA-735 / DSM 15497 / L2-TR)).